The chain runs to 292 residues: Undecaprenyl-diphosphatase (292 aa).

Transmembrane regions (helical) follow at residues methionine 1–valine 21, phenylalanine 46–isoleucine 66, leucine 90–histidine 110, alanine 114–alanine 134, phenylalanine 192–proline 212, valine 225–tryptophan 245, and valine 253–valine 273.

Belongs to the UppP family.

It is found in the cell inner membrane. It carries out the reaction di-trans,octa-cis-undecaprenyl diphosphate + H2O = di-trans,octa-cis-undecaprenyl phosphate + phosphate + H(+). Catalyzes the dephosphorylation of undecaprenyl diphosphate (UPP). Confers resistance to bacitracin. The sequence is that of Undecaprenyl-diphosphatase from Anaeromyxobacter sp. (strain K).